Here is a 1032-residue protein sequence, read N- to C-terminus: Vacuolar membrane protease (1032 aa).

Topologically, residues 1 to 11 (MKLGNPFVFRP) are cytoplasmic. The helical transmembrane segment at 12–32 (GPVSFWTTIVYLAIIIPLIYV) threads the bilayer. Over 33–415 (QETVPPAPSE…SAFALRGLFA (383 aa)) the chain is Vacuolar. N-linked (GlcNAc...) asparagine glycans are attached at residues N50, N138, and N147. Residues H194 and D206 each contribute to the Zn(2+) site. The active-site Proton acceptor is the E240. The Zn(2+) site is built by E241, E266, and H339. The helical transmembrane segment at 416–436 (WTLTLLITTPLVLFVVTYLLV) threads the bilayer. The Cytoplasmic portion of the chain corresponds to 437–469 (RDDKWYFFATKVDSTVGDGEETVSFGGWKGFVR). A helical membrane pass occupies residues 470–490 (FPFALVVATALTIGSVFLLAK). Residues 491 to 493 (VNP) lie on the Vacuolar side of the membrane. Residues 494–514 (LIIYSSGYSVWAMMISLFYFV) form a helical membrane-spanning segment. Over 515–532 (SWLLLRGAHFVRPSALQR) the chain is Cytoplasmic. The helical transmembrane segment at 533–553 (GFTLIWLFIITWVLSVFAAVA) threads the bilayer. Topologically, residues 554-560 (EDRMNMG) are vacuolar. The chain crosses the membrane as a helical span at residues 561-581 (AVYPLAFLHTFAFAAVLISLL). The Cytoplasmic segment spans residues 582–701 (EQYALPAKQD…WSGRLPTWTW (120 aa)). Residues 595 to 688 (QVSGENEEEE…RKRSFPPYEN (94 aa)) form a disordered region. Positions 599–608 (ENEEEEEQEQ) are enriched in acidic residues. The span at 651–660 (SSEQTTTFAN) shows a compositional bias: polar residues. A helical transmembrane segment spans residues 702 to 722 (FIQLLLLVPLYVTVLGNLALV). At 723–738 (QTTSIGKTGTDGSSLL) the chain is on the vacuolar side. Residues 739–759 (APLMGVGILAILLLLPLTPFI) form a helical membrane-spanning segment. At 760–766 (HRVSHHV) the chain is on the cytoplasmic side. Residues 767–787 (PLFLFLVFIGTLIYNLTAFPF) form a helical membrane-spanning segment. Topologically, residues 788-1032 (SDNNRFKFYF…VEITKKIKVA (245 aa)) are vacuolar. A glycan (N-linked (GlcNAc...) asparagine) is linked at N940.

It belongs to the peptidase M28 family. Requires Zn(2+) as cofactor.

It localises to the vacuole membrane. Its function is as follows. May be involved in vacuolar sorting and osmoregulation. The polypeptide is Vacuolar membrane protease (Metarhizium robertsii (strain ARSEF 23 / ATCC MYA-3075) (Metarhizium anisopliae (strain ARSEF 23))).